The following is a 381-amino-acid chain: Peptidoglycan transport system permease protein YejE (381 aa).

5 helical membrane passes run 38–58 (YWSF…EFIA), 183–203 (VLFG…AGAI), 230–250 (ILLI…GIML), 292–312 (LLPN…SGSI), and 347–367 (WLGL…IFVG). Residues 179 to 371 (FRISVLFGLT…LLIFVGEAVR (193 aa)) enclose the ABC transmembrane type-1 domain.

It belongs to the binding-protein-dependent transport system permease family. The complex is composed of one ATP-binding protein (YejF), two transmembrane proteins (YejB and YejE) and a solute-binding protein (YepA or YejA).

The protein resides in the cell inner membrane. Part of the ABC transporter complex YejBEF-YepA involved in the uptake of muropeptides, the breakdown products of cell wall peptidoglycan. The import of muropeptides into the cell enables peptidoglycan recycling, which is vital for cell wall integrity in this bacterium. Is also probably part of the ABC transporter complex YejABEF, which is likely involved in broad-spectrum peptide import. Responsible for the translocation of the substrate across the membrane. This is Peptidoglycan transport system permease protein YejE from Agrobacterium fabrum (strain C58 / ATCC 33970) (Agrobacterium tumefaciens (strain C58)).